The sequence spans 148 residues: Sec-independent protein translocase protein TatB (148 aa).

Residues methionine 1–glycine 21 traverse the membrane as a helical segment.

This sequence belongs to the TatB family. The Tat system comprises two distinct complexes: a TatABC complex, containing multiple copies of TatA, TatB and TatC subunits, and a separate TatA complex, containing only TatA subunits. Substrates initially bind to the TatABC complex, which probably triggers association of the separate TatA complex to form the active translocon.

Its subcellular location is the cell inner membrane. Part of the twin-arginine translocation (Tat) system that transports large folded proteins containing a characteristic twin-arginine motif in their signal peptide across membranes. Together with TatC, TatB is part of a receptor directly interacting with Tat signal peptides. TatB may form an oligomeric binding site that transiently accommodates folded Tat precursor proteins before their translocation. In Aeromonas salmonicida (strain A449), this protein is Sec-independent protein translocase protein TatB.